The following is a 369-amino-acid chain: Transcription initiation factor IIA large subunit (369 aa).

2 stretches are compositionally biased toward polar residues: residues 113–210 (HGNS…QNSP) and 218–233 (TESS…NDVP). A disordered region spans residues 113-248 (HGNSNYYSPP…IHDLDDAGSP (136 aa)). Ser-249 is modified (phosphoserine). The interval 282 to 319 (IEDNEDEKKPPVDTPSDEAINSDLDDPDSDEAPETEEG) is disordered. A compositionally biased stretch (acidic residues) spans 304–319 (DLDDPDSDEAPETEEG).

It belongs to the TFIIA subunit 1 family. In terms of assembly, TFIIA is a heterodimer of the large subunit and the small subunit gamma.

It localises to the nucleus. Functionally, TFIIA is a component of the transcription machinery of RNA polymerase II and plays an important role in transcriptional activation. TFIIA in a complex with tbp mediates transcriptional activity. The chain is Transcription initiation factor IIA large subunit from Schizosaccharomyces pombe (strain 972 / ATCC 24843) (Fission yeast).